The sequence spans 239 residues: Type III effector protein HopBA1 (239 aa).

The segment covering 1-20 has biased composition (low complexity); sequence MLNRISSSSPTSYVSSGSSS. The disordered stretch occupies residues 1 to 31; it reads MLNRISSSSPTSYVSSGSSSAGINPSINVRP.

It is found in the secreted. The protein resides in the host cell. In terms of biological role, virulence factor recognized by the A.thaliana disease resistance protein RBA1, which triggers plant cell death. HopBA1 enhances RBA1 self-association, which is necessary for ectopic autoactivation of host cell death. This Pseudomonas syringae pv. aptata protein is Type III effector protein HopBA1.